Reading from the N-terminus, the 201-residue chain is FMN-dependent NADH:quinone oxidoreductase (201 aa).

Residues serine 9 and 93-96 (MYNF) each bind FMN.

Belongs to the azoreductase type 1 family. Homodimer. FMN is required as a cofactor.

The catalysed reaction is 2 a quinone + NADH + H(+) = 2 a 1,4-benzosemiquinone + NAD(+). The enzyme catalyses N,N-dimethyl-1,4-phenylenediamine + anthranilate + 2 NAD(+) = 2-(4-dimethylaminophenyl)diazenylbenzoate + 2 NADH + 2 H(+). Its function is as follows. Quinone reductase that provides resistance to thiol-specific stress caused by electrophilic quinones. In terms of biological role, also exhibits azoreductase activity. Catalyzes the reductive cleavage of the azo bond in aromatic azo compounds to the corresponding amines. The protein is FMN-dependent NADH:quinone oxidoreductase of Bradyrhizobium sp. (strain BTAi1 / ATCC BAA-1182).